The primary structure comprises 477 residues: UDP-N-acetylmuramate--L-alanine ligase (477 aa).

122–128 (GTHGKTT) serves as a coordination point for ATP.

Belongs to the MurCDEF family.

Its subcellular location is the cytoplasm. The catalysed reaction is UDP-N-acetyl-alpha-D-muramate + L-alanine + ATP = UDP-N-acetyl-alpha-D-muramoyl-L-alanine + ADP + phosphate + H(+). Its pathway is cell wall biogenesis; peptidoglycan biosynthesis. In terms of biological role, cell wall formation. This is UDP-N-acetylmuramate--L-alanine ligase from Xylella fastidiosa (strain M23).